Here is a 251-residue protein sequence, read N- to C-terminus: Triosephosphate isomerase (251 aa).

Asparagine 9–lysine 11 lines the substrate pocket. The active-site Electrophile is the histidine 95. The active-site Proton acceptor is the glutamate 167. Substrate-binding positions include glycine 173, serine 213, and glycine 234–glycine 235.

It belongs to the triosephosphate isomerase family. In terms of assembly, homodimer.

It is found in the cytoplasm. It catalyses the reaction D-glyceraldehyde 3-phosphate = dihydroxyacetone phosphate. It participates in carbohydrate biosynthesis; gluconeogenesis. It functions in the pathway carbohydrate degradation; glycolysis; D-glyceraldehyde 3-phosphate from glycerone phosphate: step 1/1. Functionally, involved in the gluconeogenesis. Catalyzes stereospecifically the conversion of dihydroxyacetone phosphate (DHAP) to D-glyceraldehyde-3-phosphate (G3P). The sequence is that of Triosephosphate isomerase from Lactobacillus gasseri (strain ATCC 33323 / DSM 20243 / BCRC 14619 / CIP 102991 / JCM 1131 / KCTC 3163 / NCIMB 11718 / NCTC 13722 / AM63).